We begin with the raw amino-acid sequence, 335 residues long: Ornithine carbamoyltransferase 2, catabolic (335 aa).

Residues Ser62 to Thr65, Gln89, Arg113, and His140 to Gln143 each bind carbamoyl phosphate. L-ornithine contacts are provided by residues Asn172, Asp236, and Ser240–Met241. Residues Cys277–Leu278 and Arg322 contribute to the carbamoyl phosphate site.

The protein belongs to the aspartate/ornithine carbamoyltransferase superfamily. OTCase family.

It is found in the cytoplasm. The catalysed reaction is carbamoyl phosphate + L-ornithine = L-citrulline + phosphate + H(+). It participates in amino-acid degradation; L-arginine degradation via ADI pathway; carbamoyl phosphate from L-arginine: step 2/2. Reversibly catalyzes the transfer of the carbamoyl group from carbamoyl phosphate (CP) to the N(epsilon) atom of ornithine (ORN) to produce L-citrulline. The protein is Ornithine carbamoyltransferase 2, catabolic (arcB2) of Staphylococcus epidermidis (strain ATCC 12228 / FDA PCI 1200).